The following is a 632-amino-acid chain: Probable potassium transport system protein Kup 3 (632 aa).

12 consecutive transmembrane segments (helical) span residues 17–37 (LFYL…TSPL), 60–80 (LISL…VLFL), 106–126 (TAIL…DAMI), 144–164 (PSLS…LFVV), 175–195 (FFGP…ISHI), 210–230 (AVSF…AVFL), 254–274 (WFLL…ALVL), 292–312 (ALLP…QAVI), 344–364 (IFVP…VLSF), 370–390 (LATA…IMAF), 401–421 (LPLA…FLGA), and 426–446 (IHDG…IMWT).

This sequence belongs to the HAK/KUP transporter (TC 2.A.72) family.

It is found in the cell inner membrane. The enzyme catalyses K(+)(in) + H(+)(in) = K(+)(out) + H(+)(out). Its function is as follows. Transport of potassium into the cell. Likely operates as a K(+):H(+) symporter. The polypeptide is Probable potassium transport system protein Kup 3 (Rhizobium etli (strain ATCC 51251 / DSM 11541 / JCM 21823 / NBRC 15573 / CFN 42)).